The primary structure comprises 291 residues: tRNA dimethylallyltransferase (291 aa).

9–16 serves as a coordination point for ATP; the sequence is GPTASGKT. 11–16 serves as a coordination point for substrate; sequence TASGKT. Residues 34–37 form an interaction with substrate tRNA region; the sequence is DSLQ.

This sequence belongs to the IPP transferase family. As to quaternary structure, monomer. It depends on Mg(2+) as a cofactor.

It catalyses the reaction adenosine(37) in tRNA + dimethylallyl diphosphate = N(6)-dimethylallyladenosine(37) in tRNA + diphosphate. Its function is as follows. Catalyzes the transfer of a dimethylallyl group onto the adenine at position 37 in tRNAs that read codons beginning with uridine, leading to the formation of N6-(dimethylallyl)adenosine (i(6)A). This chain is tRNA dimethylallyltransferase, found in Aster yellows witches'-broom phytoplasma (strain AYWB).